The sequence spans 258 residues: Pimeloyl-[acyl-carrier protein] methyl ester esterase (258 aa).

Residues 17-241 form the AB hydrolase-1 domain; it reads VYLIHGWGAN…KAAHAPFLSH (225 aa). Residues tryptophan 23, 83–84, and 145–149 contribute to the substrate site; these read SL and FLQLQ. The active-site Nucleophile is the serine 83. Active-site residues include aspartate 207 and histidine 235. A substrate-binding site is contributed by histidine 235.

The protein belongs to the AB hydrolase superfamily. Carboxylesterase BioH family. In terms of assembly, monomer.

The protein resides in the cytoplasm. It catalyses the reaction 6-carboxyhexanoyl-[ACP] methyl ester + H2O = 6-carboxyhexanoyl-[ACP] + methanol + H(+). The protein operates within cofactor biosynthesis; biotin biosynthesis. The physiological role of BioH is to remove the methyl group introduced by BioC when the pimeloyl moiety is complete. It allows to synthesize pimeloyl-ACP via the fatty acid synthetic pathway through the hydrolysis of the ester bonds of pimeloyl-ACP esters. This Neisseria meningitidis serogroup B (strain ATCC BAA-335 / MC58) protein is Pimeloyl-[acyl-carrier protein] methyl ester esterase.